Here is a 1010-residue protein sequence, read N- to C-terminus: Plasma membrane ATPase 2 (1010 aa).

Residues 1–14 (MQRNNGEGRPEGMH) are compositionally biased toward basic and acidic residues. 2 disordered regions span residues 1 to 126 (MQRN…EDED) and 139 to 165 (QDQE…PEEL). The Cytoplasmic portion of the chain corresponds to 1–201 (MQRNNGEGRP…KEEKTNNIKK (201 aa)). The span at 25-34 (FKNNASPQDD) shows a compositional bias: polar residues. Over residues 42–52 (YEEGGVEDSAV) the composition is skewed to acidic residues. Residues 68 to 106 (APNTHAQQANLQSGNTSITHETQSTSRGQEATTSPSLSA) show a composition bias toward polar residues. The segment covering 140–151 (DQEEEQVEEEES) has biased composition (acidic residues). Residues 202–222 (FLSFFVGPIQFVMELAAALAA) form a helical membrane-spanning segment. The Extracellular portion of the chain corresponds to 223–226 (GLRD). Residues 227–246 (WVDFGVICALLLLNATVGFV) form a helical membrane-spanning segment. At 247 to 377 (QEYQAGSIVD…SQGHFTEVLN (131 aa)) the chain is on the cytoplasmic side. The chain crosses the membrane as a helical span at residues 378–399 (GIGTILLVLVILTLLCIYTAAF). Topologically, residues 400 to 410 (YRSVRLAALLE) are extracellular. A helical membrane pass occupies residues 411-433 (YTLAITIIGVPVGLPAVVTTTMA). The Cytoplasmic segment spans residues 434–805 (VGAAYLAKKK…LIIRNQLLNL (372 aa)). Asp464 (4-aspartylphosphate intermediate) is an active-site residue. Mg(2+) contacts are provided by Asp720 and Asp724. A helical transmembrane segment spans residues 806-824 (ELIVFIAIFADVATLAIAY). The Extracellular segment spans residues 825-840 (DNAPYAMKPVKWNLPR). Residues 841-860 (LWGLATIVGILLAIGTWIVN) form a helical membrane-spanning segment. Over 861–912 (TTMIAQGQNRGIVQNFGVQDEVLFLQISLTENWLIFITRCSGPFWSSFPSWQ) the chain is Cytoplasmic. A helical transmembrane segment spans residues 913–933 (LSGAVLVVDILATLFCIFGWF). The Extracellular segment spans residues 934–946 (KGGHQTSIVAVIR). Residues 947–963 (IWMYSFGIFCLIAGVYY) traverse the membrane as a helical segment. Topologically, residues 964–1010 (ILSESSSFDRWMHGKHKERGTTRKLEDFVMQLQRTSTHHEAEGKVTS) are cytoplasmic.

This sequence belongs to the cation transport ATPase (P-type) (TC 3.A.3) family. Type IIIA subfamily. In terms of processing, in addition to transient phosphorylation of the active site Asp residue, this protein, but not the product of the pma1 locus, is phosphorylated efficiently in isolated plasma membrane.

It is found in the cell membrane. It catalyses the reaction ATP + H2O + H(+)(in) = ADP + phosphate + 2 H(+)(out). In terms of biological role, the plasma membrane ATPase of plants and fungi is a hydrogen ion pump. The proton gradient it generates drives the active transport of nutrients by H(+)-symport. The resulting external acidification and/or internal alkinization may mediate growth responses. The sequence is that of Plasma membrane ATPase 2 (pma2) from Schizosaccharomyces pombe (strain 972 / ATCC 24843) (Fission yeast).